We begin with the raw amino-acid sequence, 402 residues long: Oxysterol-binding protein 12 (402 aa).

Residues Asn333–Glu366 are disordered. A compositionally biased stretch (basic and acidic residues) spans Asn336 to Glu366.

This sequence belongs to the OSBP family.

This is Oxysterol-binding protein 12 (osbL) from Dictyostelium discoideum (Social amoeba).